A 127-amino-acid chain; its full sequence is Glycine cleavage system H protein (127 aa).

The Lipoyl-binding domain occupies 24 to 106 (VVTVGVTFHA…YGAGWFFKLK (83 aa)). At Lys65 the chain carries N6-lipoyllysine.

It belongs to the GcvH family. As to quaternary structure, the glycine cleavage system is composed of four proteins: P, T, L and H. (R)-lipoate is required as a cofactor.

In terms of biological role, the glycine cleavage system catalyzes the degradation of glycine. The H protein shuttles the methylamine group of glycine from the P protein to the T protein. This chain is Glycine cleavage system H protein, found in Laribacter hongkongensis (strain HLHK9).